Here is a 462-residue protein sequence, read N- to C-terminus: Phosphoglycerate kinase, chloroplastic (462 aa).

The transit peptide at 1 to 61 (MALSMKMRAN…AGRSRIVVEA (61 aa)) directs the protein to the chloroplast. The (2R)-3-phosphoglycerate site is built by Ala83, Asp84, Asn86, Arg101, Ser123, His124, Gly126, Arg127, Arg183, His215, and Arg216. Gly261 is a binding site for ADP. A CDP-binding site is contributed by Gly261. AMP is bound by residues Lys263 and Lys267. Lys267 provides a ligand contact to ATP. Gly285 serves as a coordination point for ADP. Gly285 contacts CDP. AMP is bound by residues Gly286 and Gly358. Residues Gly286 and Gly358 each coordinate ATP. 2 residues coordinate CDP: Gly383 and Phe388. Phe388 provides a ligand contact to ADP. Glu389 contributes to the AMP binding site. Glu389, Asp420, and Ser421 together coordinate ATP. Asp420 is a binding site for Mg(2+).

The protein belongs to the phosphoglycerate kinase family. As to quaternary structure, monomer. It depends on Mg(2+) as a cofactor.

The protein resides in the plastid. It localises to the chloroplast. It catalyses the reaction (2R)-3-phosphoglycerate + ATP = (2R)-3-phospho-glyceroyl phosphate + ADP. It participates in carbohydrate biosynthesis; Calvin cycle. The protein is Phosphoglycerate kinase, chloroplastic (PGK) of Volvox carteri (Green alga).